The sequence spans 349 residues: Ferredoxin--NADP reductase (349 aa).

Residues Asp-35, Gln-43, Tyr-48, Val-88, Phe-123, Asp-288, and Thr-329 each coordinate FAD.

The protein belongs to the ferredoxin--NADP reductase type 2 family. In terms of assembly, homodimer. The cofactor is FAD.

It catalyses the reaction 2 reduced [2Fe-2S]-[ferredoxin] + NADP(+) + H(+) = 2 oxidized [2Fe-2S]-[ferredoxin] + NADPH. The sequence is that of Ferredoxin--NADP reductase from Colwellia psychrerythraea (strain 34H / ATCC BAA-681) (Vibrio psychroerythus).